The sequence spans 437 residues: Bile acid CoA-transferase BaiK (437 aa).

The Nucleophile role is filled by D171.

The protein belongs to the CoA-transferase III family.

The catalysed reaction is deoxycholoyl-CoA + cholate = choloyl-CoA + deoxycholate. It catalyses the reaction allodeoxycholoyl-CoA + cholate = allodeoxycholate + choloyl-CoA. The enzyme catalyses allocholate + deoxycholoyl-CoA = allocholoyl-CoA + deoxycholate. It carries out the reaction allocholate + allodeoxycholoyl-CoA = allocholoyl-CoA + allodeoxycholate. The catalysed reaction is ursodeoxycholate + deoxycholoyl-CoA = ursodeoxycholoyl-CoA + deoxycholate. It catalyses the reaction allodeoxycholoyl-CoA + ursodeoxycholate = ursodeoxycholoyl-CoA + allodeoxycholate. The protein operates within lipid metabolism; bile acid biosynthesis. Functions in the bile acid 7alpha-dehydroxylation pathway, which forms secondary bile acids via the 7alpha-dehydroxylation of primary bile acids, and is carried out by intestinal anaerobic bacteria. Acts as a bile acid CoA transferase with broad bile acid substrate specificity. Catalyzes the transfer of the CoA moiety of secondary bile acid-CoA compounds to primary bile acids. Can use deoxycholoyl-CoA and allodeoxycholoyl-CoA as bile acid CoA donors and cholate, allocholate and ursodeoxycholate as bile acid CoA acceptors. Shows no activity when lithocholoyl-CoA is used as the CoA donor. In Clostridium scindens (strain JCM 10418 / VPI 12708), this protein is Bile acid CoA-transferase BaiK.